Here is a 574-residue protein sequence, read N- to C-terminus: Polyamine aminopropyltransferase (574 aa).

7 consecutive transmembrane segments (helical) span residues 22–42 (VLLL…EYLL), 55–75 (AAIY…AFAA), 90–110 (LTVA…IGFG), 144–164 (LPYF…PLIA), 188–208 (IGAG…DIQL), 209–229 (AAAL…WRFW), and 237–257 (LLLA…IQGP). Residues 254 to 510 (IQGPSWEQQF…ATLDGKDAQH (257 aa)) form a spermidine synthase region. The PABS domain occupies 257–505 (PSWEQQFNNL…WGWSIATLDG (249 aa)). Q281 serves as a coordination point for S-methyl-5'-thioadenosine. Spermidine-binding residues include H317 and D341. S-methyl-5'-thioadenosine contacts are provided by residues D360 and 403–404 (DA). D424 acts as the Proton acceptor in catalysis.

This sequence belongs to the spermidine/spermine synthase family. In terms of assembly, homodimer or homotetramer.

It localises to the cell membrane. The catalysed reaction is S-adenosyl 3-(methylsulfanyl)propylamine + putrescine = S-methyl-5'-thioadenosine + spermidine + H(+). The protein operates within amine and polyamine biosynthesis; spermidine biosynthesis; spermidine from putrescine: step 1/1. Its function is as follows. Catalyzes the irreversible transfer of a propylamine group from the amino donor S-adenosylmethioninamine (decarboxy-AdoMet) to putrescine (1,4-diaminobutane) to yield spermidine. This is Polyamine aminopropyltransferase from Shewanella oneidensis (strain ATCC 700550 / JCM 31522 / CIP 106686 / LMG 19005 / NCIMB 14063 / MR-1).